A 573-amino-acid chain; its full sequence is Urease subunit alpha 2 (573 aa).

The Urease domain occupies 135-573; the sequence is GGMDTHVHYI…ISLNQLYFFS (439 aa). Ni(2+) contacts are provided by H140, H142, and K223. K223 carries the post-translational modification N6-carboxylysine. Residue H225 participates in substrate binding. The Ni(2+) site is built by H252 and H278. Residue H326 is the Proton donor of the active site. D366 serves as a coordination point for Ni(2+).

The protein belongs to the metallo-dependent hydrolases superfamily. Urease alpha subunit family. Heterotrimer of UreA (gamma), UreB (beta) and UreC (alpha) subunits. Three heterotrimers associate to form the active enzyme. Ni cation is required as a cofactor. Post-translationally, carboxylation allows a single lysine to coordinate two nickel ions.

The protein resides in the cytoplasm. The enzyme catalyses urea + 2 H2O + H(+) = hydrogencarbonate + 2 NH4(+). The protein operates within nitrogen metabolism; urea degradation; CO(2) and NH(3) from urea (urease route): step 1/1. This chain is Urease subunit alpha 2, found in Brucella melitensis biotype 1 (strain ATCC 23456 / CCUG 17765 / NCTC 10094 / 16M).